A 199-amino-acid polypeptide reads, in one-letter code: Chaperone protein TorD (199 aa).

It belongs to the TorD/DmsD family. TorD subfamily.

It is found in the cytoplasm. In terms of biological role, involved in the biogenesis of TorA. Acts on TorA before the insertion of the molybdenum cofactor and, as a result, probably favors a conformation of the apoenzyme that is competent for acquiring the cofactor. This chain is Chaperone protein TorD, found in Escherichia coli O6:H1 (strain CFT073 / ATCC 700928 / UPEC).